We begin with the raw amino-acid sequence, 359 residues long: WAT1-related protein At4g16620 (359 aa).

10 consecutive transmembrane segments (helical) span residues 5–25 (ETLI…IYAG), 41–61 (LLIV…LAFL), 77–97 (IKLV…FLEG), 105–125 (MATA…WAAG), 143–163 (TVLC…TATL), 183–203 (ILGC…IVLQ), 206–226 (ILAE…MGGI), 246–266 (VIGL…SGGG), 279–299 (PVIV…VSAF), and 305–325 (FNLG…FVLW). The EamA 1 domain maps to 30–154 (LSQLLSLGID…LCVMGALIMS (125 aa)). The 119-residue stretch at 206–324 (ILAEFPAPIS…LMFGGLYFVL (119 aa)) folds into the EamA 2 domain.

This sequence belongs to the drug/metabolite transporter (DMT) superfamily. Plant drug/metabolite exporter (P-DME) (TC 2.A.7.4) family.

It localises to the membrane. The polypeptide is WAT1-related protein At4g16620 (Arabidopsis thaliana (Mouse-ear cress)).